A 223-amino-acid polypeptide reads, in one-letter code: Mitochondrial cardiolipin hydrolase (223 aa).

Topologically, residues 1–6 (MGCASS) are mitochondrial intermembrane. The chain crosses the membrane as a helical span at residues 7–24 (KEEVALTPLSDVNAAKEV). The Cytoplasmic segment spans residues 25–223 (ADLKAQVDQL…QFDKLWDMFK (199 aa)). Residues 164 to 191 (TAAHMHHKFAIIDGRLLLNGSFNWTRQA) form the PLD phosphodiesterase domain. Catalysis depends on residues H169, K171, and D176.

This sequence belongs to the phospholipase D family. MitoPLD/Zucchini subfamily. In terms of assembly, homodimer.

The protein resides in the mitochondrion outer membrane. In terms of biological role, plays a critical role in PIWI-interacting RNA (piRNA) biogenesis. piRNAs provide essential protection against the activity of mobile genetic elements. piRNA-mediated transposon silencing is thus critical for maintaining genome stability. Backbone-non-specific, single strand-specific nuclease, cleaving either RNA or DNA substrates with similar affinity. Produces 5' phosphate and 3' hydroxyl termini, suggesting it could directly participate in the processing of primary piRNA transcripts. Has been proposed to act as a cardiolipin hydrolase to generate phosphatidic acid at mitochondrial surface. Although it cannot be excluded that it can act as a phospholipase in some circumstances, this activity could not be confirmed. This Chlamydomonas reinhardtii (Chlamydomonas smithii) protein is Mitochondrial cardiolipin hydrolase.